Reading from the N-terminus, the 65-residue chain is Weak toxin CM-13b (65 aa).

5 cysteine pairs are disulfide-bonded: Cys3–Cys24, Cys6–Cys11, Cys17–Cys42, Cys46–Cys57, and Cys58–Cys63.

This sequence belongs to the three-finger toxin family. Ancestral subfamily. Orphan group II sub-subfamily. Expressed by the venom gland.

It localises to the secreted. In terms of biological role, binds with low affinity to muscular (alpha-1-beta-1-delta-epsilon/CHRNA1-CHRNB1-CHRND-CHRNE) and very low affinity to neuronal (alpha-7/CHRNA7) nicotinic acetylcholine receptor (nAChR). The polypeptide is Weak toxin CM-13b (Naja annulifera (Banded Egyptian cobra)).